Reading from the N-terminus, the 282-residue chain is Shikimate dehydrogenase (NADP(+)) (282 aa).

Shikimate is bound by residues 16 to 18 (SLS) and Thr63. Residue Lys67 is the Proton acceptor of the active site. Residues Asn88 and Asp103 each contribute to the shikimate site. Residues 128–132 (GAGGA) and Leu219 each bind NADP(+). Residue Tyr221 participates in shikimate binding. Gly243 serves as a coordination point for NADP(+).

It belongs to the shikimate dehydrogenase family. In terms of assembly, homodimer.

It catalyses the reaction shikimate + NADP(+) = 3-dehydroshikimate + NADPH + H(+). Its pathway is metabolic intermediate biosynthesis; chorismate biosynthesis; chorismate from D-erythrose 4-phosphate and phosphoenolpyruvate: step 4/7. Involved in the biosynthesis of the chorismate, which leads to the biosynthesis of aromatic amino acids. Catalyzes the reversible NADPH linked reduction of 3-dehydroshikimate (DHSA) to yield shikimate (SA). The polypeptide is Shikimate dehydrogenase (NADP(+)) (Xylella fastidiosa (strain M12)).